The following is a 161-amino-acid chain: Type-1 angiotensin II receptor-associated protein (161 aa).

Residues 1–26 (MELPAVNLKVILLVHWLLTTWGCLVF) lie on the Extracellular side of the membrane. The helical transmembrane segment at 27 to 47 (SSSYAWGNFTILALGVWAVAQ) threads the bilayer. The Cytoplasmic portion of the chain corresponds to 48–53 (RDSIDA). The helical transmembrane segment at 54–74 (IGMFLGGLVATIFLDIIYISI) threads the bilayer. At 75–86 (FYSSVATGDTGR) the chain is on the extracellular side. A helical membrane pass occupies residues 87 to 107 (FGAGMAILSLLLKPFSCCLVY). Residues 108-161 (HMHRERGGELPLRPDFFGPSQEHSAYQTIDSSSDAAADPFASLENKGQAVPRGY) are Cytoplasmic-facing. The interaction with AGTR1 stretch occupies residues 110 to 122 (HRERGGELPLRPD). Ser127 is subject to Phosphoserine. Position 135 is a phosphothreonine (Thr135). A Phosphoserine modification is found at Ser138.

Interacts with RACK1, and with the C-terminal region of AGTR1. Ubiquitous but more abundant in kidney, testis and heart.

The protein resides in the endoplasmic reticulum membrane. Its subcellular location is the golgi apparatus membrane. The protein localises to the cytoplasmic vesicle membrane. Functionally, appears to be a negative regulator of type-1 angiotensin II receptor-mediated signaling by regulating receptor internalization as well as mechanism of receptor desensitization such as phosphorylation. Also induces a decrease in angiotensin II-stimulated transcriptional activity. May play a role of negative regulator in cardiomyocyte hypertrophy induced by angiotensin II through an inhibition of p38 mitogen-activated protein kinase pathway. This Mus musculus (Mouse) protein is Type-1 angiotensin II receptor-associated protein (Agtrap).